A 61-amino-acid polypeptide reads, in one-letter code: Beta-defensin 133 (61 aa).

The signal sequence occupies residues 1-23 (MKIHVFLFVLFFFLVPIATRVKC). Disulfide bonds link Cys-31–Cys-59 and Cys-38–Cys-52.

Belongs to the beta-defensin family.

The protein localises to the secreted. Its function is as follows. Has antibacterial activity. This is Beta-defensin 133 (DEFB133) from Homo sapiens (Human).